Reading from the N-terminus, the 497-residue chain is Replication factor C large subunit (497 aa).

50–57 (GPAGVGKT) contacts ATP. Residues 428–455 (KRRSLGRDEGKAFFEKKPKKQTPDKKQM) are compositionally biased toward basic and acidic residues. Residues 428–497 (KRRSLGRDEG…AKPQKTLFDF (70 aa)) form a disordered region. The segment covering 456 to 465 (DLTQIINSTP) has biased composition (polar residues). Over residues 466–476 (QEDKVEKKETE) the composition is skewed to basic and acidic residues.

It belongs to the activator 1 small subunits family. RfcL subfamily. In terms of assembly, heteromultimer composed of small subunits (RfcS) and large subunits (RfcL).

Functionally, part of the RFC clamp loader complex which loads the PCNA sliding clamp onto DNA. The sequence is that of Replication factor C large subunit from Methanococcoides burtonii (strain DSM 6242 / NBRC 107633 / OCM 468 / ACE-M).